We begin with the raw amino-acid sequence, 171 residues long: Large ribosomal subunit protein uL10 (171 aa).

The protein belongs to the universal ribosomal protein uL10 family. Part of the ribosomal stalk of the 50S ribosomal subunit. The N-terminus interacts with L11 and the large rRNA to form the base of the stalk. The C-terminus forms an elongated spine to which L12 dimers bind in a sequential fashion forming a multimeric L10(L12)X complex.

Functionally, forms part of the ribosomal stalk, playing a central role in the interaction of the ribosome with GTP-bound translation factors. In Zymomonas mobilis subsp. mobilis (strain ATCC 31821 / ZM4 / CP4), this protein is Large ribosomal subunit protein uL10.